We begin with the raw amino-acid sequence, 591 residues long: Aspartate--tRNA ligase (591 aa).

Glutamate 173 provides a ligand contact to L-aspartate. The segment at 197 to 200 is aspartate; sequence QLFK. Position 219 (arginine 219) interacts with L-aspartate. ATP is bound by residues 219 to 221 and glutamine 228; that span reads RDE. Histidine 448 serves as a coordination point for L-aspartate. Residue glutamate 482 participates in ATP binding. Arginine 489 provides a ligand contact to L-aspartate. Residue 534–537 coordinates ATP; that stretch reads GLDR.

Belongs to the class-II aminoacyl-tRNA synthetase family. Type 1 subfamily. Homodimer.

The protein localises to the cytoplasm. The catalysed reaction is tRNA(Asp) + L-aspartate + ATP = L-aspartyl-tRNA(Asp) + AMP + diphosphate. In terms of biological role, catalyzes the attachment of L-aspartate to tRNA(Asp) in a two-step reaction: L-aspartate is first activated by ATP to form Asp-AMP and then transferred to the acceptor end of tRNA(Asp). The chain is Aspartate--tRNA ligase from Shewanella frigidimarina (strain NCIMB 400).